The primary structure comprises 470 residues: 6-phospho-beta-glucosidase BglB (470 aa).

Catalysis depends on E172, which acts as the Proton donor. The active-site Nucleophile is E361.

The protein belongs to the glycosyl hydrolase 1 family.

It catalyses the reaction 6-phospho-beta-D-glucosyl-(1-&gt;4)-D-glucose + H2O = D-glucose 6-phosphate + D-glucose. Catalyzes the hydrolysis of phosphorylated beta-glucosides into glucose-6-phosphate (G-6-P) and aglycone. It has a high affinity for phosphorylated aromatic beta-glucosides (p-nitrophenyl-beta-glucoside, phenyl beta-glucoside, arbutin and phosphorylated salicin), and a low affinity for phosphorylated beta-methyl-glucoside. The sequence is that of 6-phospho-beta-glucosidase BglB (bglB) from Escherichia coli (strain K12).